The primary structure comprises 141 residues: Large ribosomal subunit protein uL11 (141 aa).

The protein belongs to the universal ribosomal protein uL11 family. In terms of assembly, part of the ribosomal stalk of the 50S ribosomal subunit. Interacts with L10 and the large rRNA to form the base of the stalk. L10 forms an elongated spine to which L12 dimers bind in a sequential fashion forming a multimeric L10(L12)X complex. One or more lysine residues are methylated.

In terms of biological role, forms part of the ribosomal stalk which helps the ribosome interact with GTP-bound translation factors. The chain is Large ribosomal subunit protein uL11 from Chloroherpeton thalassium (strain ATCC 35110 / GB-78).